The chain runs to 325 residues: CRISPR-associated endonuclease Cas1 3 (325 aa).

Mn(2+) contacts are provided by Glu-152, His-217, and Glu-232.

Belongs to the CRISPR-associated endonuclease Cas1 family. As to quaternary structure, homodimer, forms a heterotetramer with a Cas2 homodimer. Mg(2+) serves as cofactor. It depends on Mn(2+) as a cofactor.

Its function is as follows. CRISPR (clustered regularly interspaced short palindromic repeat), is an adaptive immune system that provides protection against mobile genetic elements (viruses, transposable elements and conjugative plasmids). CRISPR clusters contain spacers, sequences complementary to antecedent mobile elements, and target invading nucleic acids. CRISPR clusters are transcribed and processed into CRISPR RNA (crRNA). Acts as a dsDNA endonuclease. Involved in the integration of spacer DNA into the CRISPR cassette. This chain is CRISPR-associated endonuclease Cas1 3, found in Thermodesulfovibrio yellowstonii (strain ATCC 51303 / DSM 11347 / YP87).